Here is a 282-residue protein sequence, read N- to C-terminus: Succinate dehydrogenase [ubiquinone] iron-sulfur subunit, mitochondrial (282 aa).

The transit peptide at 1–21 directs the protein to the mitochondrion; sequence MLRGSTSVCRSLELVTQAARY. In terms of domain architecture, 2Fe-2S ferredoxin-type spans 39–129; it reads EIYRFNPEEP…TTKIYPLPHM (91 aa). Residues cysteine 89, cysteine 94, cysteine 97, and cysteine 109 each coordinate [2Fe-2S] cluster. The 31-residue stretch at 172 to 202 folds into the 4Fe-4S ferredoxin-type domain; the sequence is EQEKLDGLYECILCACCSASCPSYWWNADKY. [4Fe-4S] cluster is bound by residues cysteine 182, cysteine 185, and cysteine 188. Residue cysteine 192 participates in [3Fe-4S] cluster binding. Tryptophan 197 is a binding site for a rhodoquinol. Residue tryptophan 197 participates in a ubiquinone binding. [3Fe-4S] cluster-binding residues include cysteine 239 and cysteine 245. Cysteine 249 is a [4Fe-4S] cluster binding site.

Belongs to the succinate dehydrogenase/fumarate reductase iron-sulfur protein family. Component of the mitochondrial electron transport chain complex II composed of four subunits: a flavoprotein (Fp), an iron-sulfur protein (Ip), and a large cytochrome b (CybL) subunit and a small cytochrome b (CybS) subunit. There are 2 developmental stage-specific forms of complex II which have the Ip and CybL subunits in common. Complex II from the free-living larvae (aerobic environment) acts as a succinate dehydrogenase and is composed of the common subunit Ip and CybL and the stage specific subunits FpL and CybSL. Complex II from parasitic larvae and adults (anaerobic environment) acts as a fumarate reductase and is composed of the common subunit Ip and CybL and the stage specific subunits FpA and CybSA. The cofactor is [2Fe-2S] cluster. [3Fe-4S] cluster is required as a cofactor. It depends on [4Fe-4S] cluster as a cofactor. As to expression, expressed in adult muscles (at protein level).

It localises to the mitochondrion inner membrane. It carries out the reaction a ubiquinone + succinate = a ubiquinol + fumarate. It catalyses the reaction a rhodoquinone + succinate = a rhodoquinol + fumarate. It functions in the pathway carbohydrate metabolism; tricarboxylic acid cycle; fumarate from succinate (eukaryal route): step 1/1. Inhibited by the fungicide flutolanil. Its function is as follows. Iron-sulfur protein (Ip) subunit of the mitochondrial electron transport chain complex II which, together with the flavoprotein (Fp) subunit forms the catalytic core of the complex. During the free-living egg-larvae stages, which occur in an aerobic environment, complex II acts as a succinate dehydrogenase by transferring electrons from succinate to ubiquinone. During the parasitic larvae and adult stages, which occur in an anaerobic environment, complex II acts as a fumarate reductase by transferring electrons from rhodoquinol to fumarate. This is Succinate dehydrogenase [ubiquinone] iron-sulfur subunit, mitochondrial from Ascaris suum (Pig roundworm).